Reading from the N-terminus, the 59-residue chain is Anti-inflammatory peptide amregulin (59 aa).

An N-terminal signal peptide occupies residues 1–19 (MKLHMLNMLNCLLLTVCDG).

In terms of tissue distribution, salivary glands.

It is found in the secreted. Its function is as follows. Anti-inflammatory peptide that may facilitate successful blood feeding of ticks and may lead to immunotolerance in its host. Inhibits the secretion of inflammatory factors in rat splenocytes, such as tumor necrosis factor-alpha (TNF), interleukin-1, interleukin-8 (CXCL8) and interferon-gamma (IFNG). In addition, shows strong free radical scavenging and antioxidant activities in vitro. In vivo, inhibits adjuvant-induced paw inflammation in mouse models. In Amblyomma variegatum (Tropical bont tick), this protein is Anti-inflammatory peptide amregulin.